We begin with the raw amino-acid sequence, 407 residues long: Protein RecA (407 aa).

Gly-79–Thr-86 is an ATP binding site. Residues Leu-358–Leu-407 form a disordered region. Residues Ser-377–Arg-386 are compositionally biased toward low complexity.

Belongs to the RecA family.

Its subcellular location is the cytoplasm. Its function is as follows. Can catalyze the hydrolysis of ATP in the presence of single-stranded DNA, the ATP-dependent uptake of single-stranded DNA by duplex DNA, and the ATP-dependent hybridization of homologous single-stranded DNAs. It interacts with LexA causing its activation and leading to its autocatalytic cleavage. The sequence is that of Protein RecA from Treponema pallidum (strain Nichols).